Here is a 236-residue protein sequence, read N- to C-terminus: Small ribosomal subunit protein uS3 (236 aa).

A KH type-2 domain is found at 39–107 (IRKFLKREMY…EVFINIKEAK (69 aa)). A compositionally biased stretch (basic and acidic residues) spans 214–229 (PEKKEESKSGDKEVRS). Residues 214–236 (PEKKEESKSGDKEVRSKSRRGRQ) form a disordered region.

This sequence belongs to the universal ribosomal protein uS3 family. In terms of assembly, part of the 30S ribosomal subunit. Forms a tight complex with proteins S10 and S14.

Its function is as follows. Binds the lower part of the 30S subunit head. Binds mRNA in the 70S ribosome, positioning it for translation. This is Small ribosomal subunit protein uS3 from Helicobacter hepaticus (strain ATCC 51449 / 3B1).